The sequence spans 257 residues: UPF0246 protein Rsph17029_0026 (257 aa).

The protein belongs to the UPF0246 family.

The protein is UPF0246 protein Rsph17029_0026 of Cereibacter sphaeroides (strain ATCC 17029 / ATH 2.4.9) (Rhodobacter sphaeroides).